The chain runs to 164 residues: Interferon gamma (164 aa).

The signal sequence occupies residues Met1–Gly19. N-linked (GlcNAc...) asparagine glycosylation is found at Asn42, Asn61, and Asn95.

This sequence belongs to the type II (or gamma) interferon family. In terms of assembly, homodimer.

The protein localises to the secreted. In terms of biological role, produced by lymphocytes activated by specific antigens or mitogens. IFN-gamma, in addition to having antiviral activity, has important immunoregulatory functions. It is a potent activator of macrophages, it has antiproliferative effects on transformed cells and it can potentiate the antiviral and antitumor effects of the type I interferons. In Anas platyrhynchos (Mallard), this protein is Interferon gamma (IFNG).